The chain runs to 285 residues: Probable ribosomal RNA small subunit methyltransferase A (285 aa).

Positions 29, 31, 58, 79, 107, and 122 each coordinate S-adenosyl-L-methionine.

This sequence belongs to the class I-like SAM-binding methyltransferase superfamily. rRNA adenine N(6)-methyltransferase family. RsmA subfamily.

The protein resides in the cytoplasm. Specifically dimethylates two adjacent adenosines in the loop of a conserved hairpin near the 3'-end of 16S rRNA in the 30S particle. May play a critical role in biogenesis of 30S subunits. The chain is Probable ribosomal RNA small subunit methyltransferase A from Haloarcula marismortui (strain ATCC 43049 / DSM 3752 / JCM 8966 / VKM B-1809) (Halobacterium marismortui).